The primary structure comprises 210 residues: MTGLFITLEGPEGAGKSTNREYLAERLREQGVDVVLTREPGGTPLAERIRELLLDPSDEPMAADTELLLVFAARAQHLQQVIRPALAKGCVVLCDRFTDATYAYQGGGRGLSIERIAQLEQFVQGELRPDLTLIFDLPVEVGLARAAARGRLDRFEQEGRGFFEAVRQAYLQRAVQAPQHYRVLDAGQTLAQVQADIDALLPSLLEACRG.

Position 10–17 (Gly-10–Ser-17) interacts with ATP.

This sequence belongs to the thymidylate kinase family.

The catalysed reaction is dTMP + ATP = dTDP + ADP. Functionally, phosphorylation of dTMP to form dTDP in both de novo and salvage pathways of dTTP synthesis. The chain is Thymidylate kinase from Ectopseudomonas mendocina (strain ymp) (Pseudomonas mendocina).